The following is a 272-amino-acid chain: uncharacterized protein (272 aa).

The next 6 membrane-spanning stretches (helical) occupy residues 20 to 37 (VYLS…NLLI), 57 to 77 (HPLT…HFSL), 97 to 119 (LNVS…IMLM), 155 to 177 (SIAT…YVIF), 184 to 203 (LVSL…VTLG), and 234 to 256 (PYSI…WLVI).

The protein localises to the cell membrane. This is an uncharacterized protein from Halalkalibacterium halodurans (strain ATCC BAA-125 / DSM 18197 / FERM 7344 / JCM 9153 / C-125) (Bacillus halodurans).